Here is a 130-residue protein sequence, read N- to C-terminus: Small ribosomal subunit protein uS9 (130 aa).

This sequence belongs to the universal ribosomal protein uS9 family.

This Anaeromyxobacter dehalogenans (strain 2CP-1 / ATCC BAA-258) protein is Small ribosomal subunit protein uS9.